We begin with the raw amino-acid sequence, 270 residues long: Plasmanylethanolamine desaturase 1 (270 aa).

A run of 3 helical transmembrane segments spans residues 47 to 67 (WCSVILCFSLIAHNLVHLLLL), 74 to 94 (PLVILGVVAGALIADFLSGLV), and 161 to 181 (ALEQLYPWECFVFCLIIFGTF). A Histidine box-1 motif is present at residues 186 to 190 (HKWSH). The short motif at 213 to 217 (HHRIH) is the Histidine box-2 element.

The protein belongs to the fatty acid desaturase CarF family.

It is found in the endoplasmic reticulum membrane. It catalyses the reaction a 1-(1,2-saturated alkyl)-2-acyl-sn-glycero-3-phosphoethanolamine + 2 Fe(II)-[cytochrome b5] + O2 + 2 H(+) = a 1-O-(1Z-alkenyl)-2-acyl-sn-glycero-3-phosphoethanolamine + 2 Fe(III)-[cytochrome b5] + 2 H2O. It carries out the reaction a 1-O-hexadecyl-2-acyl-sn-glycero-3-phosphoethanolamine + 2 Fe(II)-[cytochrome b5] + O2 + 2 H(+) = a 1-O-(1Z-hexadecenyl)-2-acyl-sn-glycero-3-phosphoethanolamine + 2 Fe(III)-[cytochrome b5] + 2 H2O. The enzyme catalyses a 1-O-octadecyl-2-acyl-sn-glycero-3-phosphoethanolamine + 2 Fe(II)-[cytochrome b5] + O2 + 2 H(+) = a 1-O-(1Z-octadecenyl)-2-acyl-sn-glycero-3-phosphoethanolamine + 2 Fe(III)-[cytochrome b5] + 2 H2O. The catalysed reaction is a 1-O-(9Z-octadecenyl)-2-acyl-sn-glycero-3-phosphoethanolamine + 2 Fe(II)-[cytochrome b5] + O2 + 2 H(+) = a 1-O-(1Z,9Z-octadecadienyl)-2-acyl-sn-glycero-3-phosphoethanolamine + 2 Fe(III)-[cytochrome b5] + 2 H2O. Its pathway is lipid metabolism; fatty acid metabolism. In terms of biological role, plasmanylethanolamine desaturase involved in plasmalogen biogenesis in the endoplasmic reticulum membrane. Plasmalogens are glycerophospholipids with a hydrocarbon chain linked by a vinyl ether bond at the glycerol sn-1 position, and are involved in antioxidative and signaling mechanisms. This chain is Plasmanylethanolamine desaturase 1, found in Homo sapiens (Human).